A 125-amino-acid polypeptide reads, in one-letter code: Glycine cleavage system H protein (125 aa).

The Lipoyl-binding domain occupies 22–104; that stretch reads SYIIGITDFA…YDTGWILKLT (83 aa). An N6-lipoyllysine modification is found at Lys-63.

The protein belongs to the GcvH family. As to quaternary structure, the glycine cleavage system is composed of four proteins: P, T, L and H. (R)-lipoate is required as a cofactor.

Functionally, the glycine cleavage system catalyzes the degradation of glycine. The H protein shuttles the methylamine group of glycine from the P protein to the T protein. Its function is as follows. Is also involved in protein lipoylation via its role as an octanoyl/lipoyl carrier protein intermediate. This is Glycine cleavage system H protein from Listeria innocua serovar 6a (strain ATCC BAA-680 / CLIP 11262).